A 542-amino-acid polypeptide reads, in one-letter code: Glucans biosynthesis protein G (542 aa).

The signal sequence occupies residues 1–34 (MVSLLRCPSSKPYSSLICSLTLGAVVALSGVAYA).

The protein belongs to the OpgD/OpgG family.

It is found in the periplasm. The protein operates within glycan metabolism; osmoregulated periplasmic glucan (OPG) biosynthesis. In terms of biological role, involved in the biosynthesis of osmoregulated periplasmic glucans (OPGs). In Shewanella baltica (strain OS223), this protein is Glucans biosynthesis protein G.